We begin with the raw amino-acid sequence, 245 residues long: Adenylate kinase (245 aa).

15-20 (GSGKGT) contacts ATP. Residues 35–64 (SSGDLLRDAVSKDTPLSQEIKSYLDQGKLL) are NMP. AMP is bound by residues serine 36, arginine 41, 62–64 (KLL), 103–106 (GFPR), and glutamine 110. The LID stretch occupies residues 143 to 176 (SRYICPACQGIYNEQQGFSSCPKCSVELIRRSDD). Arginine 144 contacts ATP. Zn(2+) contacts are provided by cysteine 147 and cysteine 150. Residue 153 to 154 (IY) participates in ATP binding. 2 residues coordinate Zn(2+): cysteine 163 and cysteine 166. AMP contacts are provided by arginine 173 and arginine 184. Residue alanine 212 coordinates ATP.

It belongs to the adenylate kinase family. Monomer.

The protein localises to the cytoplasm. The enzyme catalyses AMP + ATP = 2 ADP. Its pathway is purine metabolism; AMP biosynthesis via salvage pathway; AMP from ADP: step 1/1. Its function is as follows. Catalyzes the reversible transfer of the terminal phosphate group between ATP and AMP. Plays an important role in cellular energy homeostasis and in adenine nucleotide metabolism. The polypeptide is Adenylate kinase (Chlamydia trachomatis serovar A (strain ATCC VR-571B / DSM 19440 / HAR-13)).